The following is a 244-amino-acid chain: Cell division protein ZapD (244 aa).

It belongs to the ZapD family. Interacts with FtsZ.

Its subcellular location is the cytoplasm. Functionally, cell division factor that enhances FtsZ-ring assembly. Directly interacts with FtsZ and promotes bundling of FtsZ protofilaments, with a reduction in FtsZ GTPase activity. This Shewanella sp. (strain MR-7) protein is Cell division protein ZapD.